We begin with the raw amino-acid sequence, 379 residues long: Homoserine O-acetyltransferase (379 aa).

The AB hydrolase-1 domain occupies 45–355 (NAILILHALT…PHGHDAFLIE (311 aa)). The active-site Nucleophile is the Ser-151. Arg-220 contacts substrate. Residues Asp-316 and His-349 contribute to the active site. Asp-350 is a substrate binding site.

It belongs to the AB hydrolase superfamily. MetX family. In terms of assembly, homodimer.

It is found in the cytoplasm. It carries out the reaction L-homoserine + acetyl-CoA = O-acetyl-L-homoserine + CoA. Its pathway is amino-acid biosynthesis; L-methionine biosynthesis via de novo pathway; O-acetyl-L-homoserine from L-homoserine: step 1/1. Functionally, transfers an acetyl group from acetyl-CoA to L-homoserine, forming acetyl-L-homoserine. This chain is Homoserine O-acetyltransferase, found in Carboxydothermus hydrogenoformans (strain ATCC BAA-161 / DSM 6008 / Z-2901).